A 586-amino-acid chain; its full sequence is uncharacterized protein (586 aa).

Residues 1–115 are disordered; it reads MRVLVAETGR…NTEKLAGRDD (115 aa). Residues 8-20 are compositionally biased toward basic and acidic residues; the sequence is TGREDNVSVHSRE. Polar residues predominate over residues 21–31; that stretch reads VSVNGSDSGTG. Residues 35–44 are compositionally biased toward basic and acidic residues; that stretch reads YKLETDDEHP. A compositionally biased stretch (polar residues) spans 76–107; sequence TGMNTEYNDDNSSLVNTPRDSTTYAETNSPNT. 6 WD repeats span residues 184-223, 253-291, 293-333, 335-374, 387-430, and 432-474; these read QFKESVWASEISKSGKYLATAGKDAIIRVWKVIETPERRE, GHNAEVLSISWSKNDFLLTSSADRTVRLWHPKSTKSLAV, RHNE…ILHW, ELEYVVSTICFYPDGESIVVGMFYGLCAIYETKNLQYVSS, CRVT…LVLK, and SDAH…LINA.

It is found in the cytoplasm. The protein resides in the nucleus. This is an uncharacterized protein from Schizosaccharomyces pombe (strain 972 / ATCC 24843) (Fission yeast).